The chain runs to 707 residues: Polyribonucleotide nucleotidyltransferase (707 aa).

Mg(2+) is bound by residues D487 and D493. One can recognise a KH domain in the interval P554–V613. The S1 motif domain maps to G623–K691.

It belongs to the polyribonucleotide nucleotidyltransferase family. In terms of assembly, component of the RNA degradosome, which is a multiprotein complex involved in RNA processing and mRNA degradation. Requires Mg(2+) as cofactor.

It localises to the cytoplasm. The enzyme catalyses RNA(n+1) + phosphate = RNA(n) + a ribonucleoside 5'-diphosphate. Involved in mRNA degradation. Catalyzes the phosphorolysis of single-stranded polyribonucleotides processively in the 3'- to 5'-direction. This is Polyribonucleotide nucleotidyltransferase from Chromohalobacter salexigens (strain ATCC BAA-138 / DSM 3043 / CIP 106854 / NCIMB 13768 / 1H11).